The chain runs to 174 residues: U-stichotoxin-Hau2a (174 aa).

An N-terminal signal peptide occupies residues 1–18; it reads MKPIFIVALLFSTCLVNA. Positions 19–33 are excised as a propeptide; the sequence is KPSINDADIKREPEP. Pro39 carries the post-translational modification Hydroxyproline. Intrachain disulfides connect Cys40–Cys51 and Cys43–Cys58. A propeptide spanning residues 61–67 is cleaved from the precursor; that stretch reads RKREPEP. Residue Pro73 is modified to Hydroxyproline. Cystine bridges form between Cys74–Cys85 and Cys77–Cys92. Residues 95–101 constitute a propeptide that is removed on maturation; the sequence is RKREPEP. Pro107 carries the post-translational modification Hydroxyproline. Disulfide bonds link Cys108-Cys119 and Cys111-Cys126. A propeptide spanning residues 129-135 is cleaved from the precursor; the sequence is RKREPEP. Hydroxyproline is present on Pro141. 2 cysteine pairs are disulfide-bonded: Cys142–Cys153 and Cys145–Cys160. Residues 163–174 constitute a propeptide that is removed on maturation; it reads RKREPENQDLWS.

This sequence belongs to the sea anemone BBH family.

Its subcellular location is the secreted. The protein resides in the nematocyst. Its function is as follows. Neurotoxin that paralyzes freshwater crabs at high concentration. This chain is U-stichotoxin-Hau2a, found in Heteractis aurora (Banded sea anemone).